The sequence spans 484 residues: Cysteine--tRNA ligase (484 aa).

Cys29 lines the Zn(2+) pocket. Residues 31-41 (PTVQSAPHIGH) carry the 'HIGH' region motif. Residues Cys219, His244, and Glu248 each contribute to the Zn(2+) site. The short motif at 275–279 (KMSKS) is the 'KMSKS' region element. Residue Lys278 coordinates ATP.

The protein belongs to the class-I aminoacyl-tRNA synthetase family. Monomer. The cofactor is Zn(2+).

It is found in the cytoplasm. It catalyses the reaction tRNA(Cys) + L-cysteine + ATP = L-cysteinyl-tRNA(Cys) + AMP + diphosphate. The protein is Cysteine--tRNA ligase of Clavibacter michiganensis subsp. michiganensis (strain NCPPB 382).